A 188-amino-acid chain; its full sequence is MATNHVLASQLPVNTKSSEIPLQSGTPPPTIIYPFQIEMASLGTADASDSISIASNSLLASVTTLYRHAKLTSLKATIHPTGQAPAFPTTVALAWVPYNSTATSAQILSVYGGQMFCIGGSINSLSPIDVPCNLTNVNPIIKDSVTYSDTPKLLLYSIAQETAPTLATCSVTITGTLTLHSPLLQATA.

This sequence belongs to the tymoviruses capsid protein family.

The protein resides in the virion. Its function is as follows. Self-assembles to form a T=3 icosahedral capsid composed of 180 copies of the capsid protein. The capsid encapsulates the single-stranded RNA genome. The protein is Capsid protein of Kennedya yellow mosaic virus (strain Jervis bay) (KYMV).